The chain runs to 158 residues: MSWTTPKKAIMLAAAAEGGTKLNAFDNALLKMGIGNVNLVKLSSVIPAHIEWLDELPKNIPIGMLLPTVYAHIESDEPGSTISAALGVGLSENNEGGLIYEYAGYCTKEEAEEMVRKMVEEGFKVRGWKLKEIKVISAEITVKDKPAAAVAAVVMFPY.

S44 bears the Pyruvic acid (Ser) mark.

The protein belongs to the PdaD family. Requires pyruvate as cofactor.

It catalyses the reaction L-arginine + H(+) = agmatine + CO2. The polypeptide is Pyruvoyl-dependent arginine decarboxylase (Pyrococcus abyssi (strain GE5 / Orsay)).